The primary structure comprises 388 residues: Succinate--CoA ligase [ADP-forming] subunit beta (388 aa).

The 236-residue stretch at 9-244 folds into the ATP-grasp domain; sequence KQLFARYGLP…QSQEDPREAQ (236 aa). ATP is bound by residues Lys-46, 53–55, Glu-99, Thr-102, and Glu-107; that span reads GRG. 2 residues coordinate Mg(2+): Asn-199 and Asp-213. Substrate contacts are provided by residues Asn-264 and 321-323; that span reads GIV.

It belongs to the succinate/malate CoA ligase beta subunit family. In terms of assembly, heterotetramer of two alpha and two beta subunits. The cofactor is Mg(2+).

The enzyme catalyses succinate + ATP + CoA = succinyl-CoA + ADP + phosphate. It catalyses the reaction GTP + succinate + CoA = succinyl-CoA + GDP + phosphate. The protein operates within carbohydrate metabolism; tricarboxylic acid cycle; succinate from succinyl-CoA (ligase route): step 1/1. Functionally, succinyl-CoA synthetase functions in the citric acid cycle (TCA), coupling the hydrolysis of succinyl-CoA to the synthesis of either ATP or GTP and thus represents the only step of substrate-level phosphorylation in the TCA. The beta subunit provides nucleotide specificity of the enzyme and binds the substrate succinate, while the binding sites for coenzyme A and phosphate are found in the alpha subunit. The sequence is that of Succinate--CoA ligase [ADP-forming] subunit beta from Klebsiella pneumoniae (strain 342).